A 109-amino-acid polypeptide reads, in one-letter code: METLLWKDAREKIKKGVNFVEFAAPWCPDCVMMKPVIEQVEQEIKNLNLPVNFYHVNADESGMFRKADAEVAVLRIPTHYIVKDGKQVFIGYEYFPKHILVEKIKELFK.

Residues 2–109 (ETLLWKDARE…LVEKIKELFK (108 aa)) form the Thioredoxin domain. A disulfide bridge links C27 with C30.

This sequence belongs to the thioredoxin family.

Its function is as follows. Participates in various redox reactions through the reversible oxidation of its active center dithiol to a disulfide and catalyzes dithiol-disulfide exchange reactions. The polypeptide is Thioredoxin (trxA) (Mycoplasmopsis pulmonis (strain UAB CTIP) (Mycoplasma pulmonis)).